The following is a 364-amino-acid chain: Peroxidase (364 aa).

The N-terminal stretch at 1 to 20 (MKLSLFSTFAAVIIGALALP) is a signal peptide. Q21 carries the post-translational modification Pyrrolidone carboxylic acid. 4 disulfides stabilise this stretch: C32–C44, C43–C313, C63–C149, and C277–C342. H76 acts as the Proton acceptor in catalysis. Ca(2+)-binding residues include D77, G95, D97, and S99. N-linked (GlcNAc...) (high mannose) asparagine glycosylation is present at N163. H204 lines the heme b pocket. 5 residues coordinate Ca(2+): S205, D222, T224, V227, and D229.

The protein belongs to the peroxidase family. Ligninase subfamily. Requires Ca(2+) as cofactor. Heme b serves as cofactor.

It localises to the secreted. It carries out the reaction 2 a phenolic donor + H2O2 = 2 a phenolic radical donor + 2 H2O. This is Peroxidase from Arthromyces ramosus.